The chain runs to 317 residues: Ribosomal protein L11 methyltransferase (317 aa).

S-adenosyl-L-methionine-binding residues include threonine 158, glycine 179, aspartate 201, and asparagine 244.

Belongs to the methyltransferase superfamily. PrmA family.

Its subcellular location is the cytoplasm. The catalysed reaction is L-lysyl-[protein] + 3 S-adenosyl-L-methionine = N(6),N(6),N(6)-trimethyl-L-lysyl-[protein] + 3 S-adenosyl-L-homocysteine + 3 H(+). Functionally, methylates ribosomal protein L11. The polypeptide is Ribosomal protein L11 methyltransferase (Streptococcus pyogenes serotype M5 (strain Manfredo)).